The primary structure comprises 437 residues: Serine--tRNA ligase (437 aa).

244 to 246 (TAE) contacts L-serine. 275–277 (RSE) serves as a coordination point for ATP. E298 is an L-serine binding site. 362–365 (EISS) is a binding site for ATP. S397 is an L-serine binding site.

The protein belongs to the class-II aminoacyl-tRNA synthetase family. Type-1 seryl-tRNA synthetase subfamily. In terms of assembly, homodimer. The tRNA molecule binds across the dimer.

The protein localises to the cytoplasm. The catalysed reaction is tRNA(Ser) + L-serine + ATP = L-seryl-tRNA(Ser) + AMP + diphosphate + H(+). It carries out the reaction tRNA(Sec) + L-serine + ATP = L-seryl-tRNA(Sec) + AMP + diphosphate + H(+). It functions in the pathway aminoacyl-tRNA biosynthesis; selenocysteinyl-tRNA(Sec) biosynthesis; L-seryl-tRNA(Sec) from L-serine and tRNA(Sec): step 1/1. In terms of biological role, catalyzes the attachment of serine to tRNA(Ser). Is also able to aminoacylate tRNA(Sec) with serine, to form the misacylated tRNA L-seryl-tRNA(Sec), which will be further converted into selenocysteinyl-tRNA(Sec). This chain is Serine--tRNA ligase, found in Nitrosomonas eutropha (strain DSM 101675 / C91 / Nm57).